The primary structure comprises 93 residues: YcgL domain-containing protein swp_2294 (93 aa).

Residues 1 to 85 (MICAVYKSLR…PVVNLLEQHK (85 aa)) enclose the YcgL domain.

The sequence is that of YcgL domain-containing protein swp_2294 from Shewanella piezotolerans (strain WP3 / JCM 13877).